Reading from the N-terminus, the 339-residue chain is Ketol-acid reductoisomerase (NADP(+)) (339 aa).

Positions 1 to 182 constitute a KARI N-terminal Rossmann domain; that stretch reads MKIYYEKDAD…GNTRAGVIET (182 aa). NADP(+) is bound by residues 24–27, serine 51, serine 53, and 83–86; these read YGSQ and DEKQ. Residue histidine 108 is part of the active site. Glycine 134 lines the NADP(+) pocket. Residues 183 to 328 enclose the KARI C-terminal knotted domain; that stretch reads SFREETETDL…EKLRGMMHWA (146 aa). The Mg(2+) site is built by aspartate 191, glutamate 195, glutamate 227, and glutamate 231. Serine 252 lines the substrate pocket.

It belongs to the ketol-acid reductoisomerase family. The cofactor is Mg(2+).

The enzyme catalyses (2R)-2,3-dihydroxy-3-methylbutanoate + NADP(+) = (2S)-2-acetolactate + NADPH + H(+). It catalyses the reaction (2R,3R)-2,3-dihydroxy-3-methylpentanoate + NADP(+) = (S)-2-ethyl-2-hydroxy-3-oxobutanoate + NADPH + H(+). It participates in amino-acid biosynthesis; L-isoleucine biosynthesis; L-isoleucine from 2-oxobutanoate: step 2/4. The protein operates within amino-acid biosynthesis; L-valine biosynthesis; L-valine from pyruvate: step 2/4. In terms of biological role, involved in the biosynthesis of branched-chain amino acids (BCAA). Catalyzes an alkyl-migration followed by a ketol-acid reduction of (S)-2-acetolactate (S2AL) to yield (R)-2,3-dihydroxy-isovalerate. In the isomerase reaction, S2AL is rearranged via a Mg-dependent methyl migration to produce 3-hydroxy-3-methyl-2-ketobutyrate (HMKB). In the reductase reaction, this 2-ketoacid undergoes a metal-dependent reduction by NADPH to yield (R)-2,3-dihydroxy-isovalerate. The polypeptide is Ketol-acid reductoisomerase (NADP(+)) (Hyphomonas neptunium (strain ATCC 15444)).